The primary structure comprises 116 residues: HVA22-like protein e (116 aa).

The next 3 membrane-spanning stretches (helical) occupy residues 12–32 (HSLA…VIAI), 42–62 (QWLA…ILQS), and 63–83 (LLEW…WLVL).

It belongs to the DP1 family. In terms of tissue distribution, predominantly expressed in stem.

The protein localises to the membrane. The protein is HVA22-like protein e (HVA22E) of Arabidopsis thaliana (Mouse-ear cress).